Here is a 120-residue protein sequence, read N- to C-terminus: Small ribosomal subunit protein eS24 (120 aa).

The interval 101 to 120 (RDAGTKQKKGGSKGGQGAKG) is disordered.

It belongs to the eukaryotic ribosomal protein eS24 family.

In Saccharolobus islandicus (strain M.16.4 / Kamchatka #3) (Sulfolobus islandicus), this protein is Small ribosomal subunit protein eS24.